Reading from the N-terminus, the 196-residue chain is Putative archaetidylserine decarboxylase proenzyme (196 aa).

Ser-164 functions as the Schiff-base intermediate with substrate; via pyruvic acid in the catalytic mechanism. Ser-164 is subject to Pyruvic acid (Ser); by autocatalysis.

It belongs to the phosphatidylserine decarboxylase family. PSD-A subfamily. In terms of assembly, heterodimer of a large membrane-associated beta subunit and a small pyruvoyl-containing alpha subunit. It depends on pyruvate as a cofactor. Is synthesized initially as an inactive proenzyme. Formation of the active enzyme involves a self-maturation process in which the active site pyruvoyl group is generated from an internal serine residue via an autocatalytic post-translational modification. Two non-identical subunits are generated from the proenzyme in this reaction, and the pyruvate is formed at the N-terminus of the alpha chain, which is derived from the carboxyl end of the proenzyme. The post-translation cleavage follows an unusual pathway, termed non-hydrolytic serinolysis, in which the side chain hydroxyl group of the serine supplies its oxygen atom to form the C-terminus of the beta chain, while the remainder of the serine residue undergoes an oxidative deamination to produce ammonia and the pyruvoyl prosthetic group on the alpha chain.

It is found in the cell membrane. The catalysed reaction is archaetidylserine + H(+) = archaetidylethanolamine + CO2. In terms of biological role, catalyzes the formation of archaetidylethanolamine (PtdEtn) from archaetidylserine (PtdSer). The protein is Putative archaetidylserine decarboxylase proenzyme of Halobacterium salinarum (strain ATCC 700922 / JCM 11081 / NRC-1) (Halobacterium halobium).